The following is a 224-amino-acid chain: MSASASTAADFVRFALDEGVLRFGSFKVKSGRISPYFFNAGLFNSGRSVGALAGFYAQALVDSGVAFDMLFGPAYKGIPLATATSVALAGHAAMAGRDVPFAFNRKEAKDHGEGGTLVGAPLTGKVVIIDDVITAGTSVRESVEIIRAAGAEPAAVLIALDRMERAGPDDALSPHSAVQDVARTYGIPVVSIASLADIMTLLQDDAQFAEHRAAVQAYRSKYGV.

Lysine 29 lines the 5-phospho-alpha-D-ribose 1-diphosphate pocket. An orotate-binding site is contributed by 37 to 38 (FF). Residues 75 to 76 (YK), arginine 105, lysine 106, lysine 109, histidine 111, and 130 to 138 (DDVITAGTS) each bind 5-phospho-alpha-D-ribose 1-diphosphate. Threonine 134 and arginine 162 together coordinate orotate.

It belongs to the purine/pyrimidine phosphoribosyltransferase family. PyrE subfamily. In terms of assembly, homodimer. Requires Mg(2+) as cofactor.

The enzyme catalyses orotidine 5'-phosphate + diphosphate = orotate + 5-phospho-alpha-D-ribose 1-diphosphate. The protein operates within pyrimidine metabolism; UMP biosynthesis via de novo pathway; UMP from orotate: step 1/2. Its function is as follows. Catalyzes the transfer of a ribosyl phosphate group from 5-phosphoribose 1-diphosphate to orotate, leading to the formation of orotidine monophosphate (OMP). In Bordetella parapertussis (strain 12822 / ATCC BAA-587 / NCTC 13253), this protein is Orotate phosphoribosyltransferase.